Here is a 122-residue protein sequence, read N- to C-terminus: Basic phospholipase A2 10 (122 aa).

Intrachain disulfides connect cysteine 26/cysteine 114, cysteine 28/cysteine 43, cysteine 42/cysteine 94, cysteine 48/cysteine 122, cysteine 49/cysteine 87, cysteine 56/cysteine 80, and cysteine 74/cysteine 85. Tyrosine 27, glycine 29, and glycine 31 together coordinate Ca(2+). The active site involves histidine 46. Residue aspartate 47 participates in Ca(2+) binding. Aspartate 88 is an active-site residue.

Ca(2+) serves as cofactor. As to expression, expressed by the venom gland.

The protein resides in the secreted. It carries out the reaction a 1,2-diacyl-sn-glycero-3-phosphocholine + H2O = a 1-acyl-sn-glycero-3-phosphocholine + a fatty acid + H(+). Inhibited by chemical modifications mediated by p-BPB, anhydrous acetic acid and NBSF. Functionally, snake venom phospholipase A2 (PLA2) that has a strong dose-dependent anticoagulant effect. In vivo, intramuscular and intervenal injection causes muscle necrosis. Induces moderate edema in the mouse foot pad. PLA2 catalyzes the calcium-dependent hydrolysis of the 2-acyl groups in 3-sn-phosphoglycerides. This Crotalus durissus cumanensis (South American rattlesnake) protein is Basic phospholipase A2 10.